The following is a 271-amino-acid chain: Phosphatidylinositol transfer protein beta isoform (271 aa).

Position 215 is an N6-acetyllysine (K215). S262 carries the post-translational modification Phosphoserine.

This sequence belongs to the PtdIns transfer protein family. PI transfer class I subfamily. Post-translationally, constitutive phosphorylation of Ser-262 has no effect on phospholipid transfer activity but is required for Golgi targeting. Widely expressed in various tissues including brain.

The protein resides in the golgi apparatus. Its subcellular location is the golgi apparatus membrane. The protein localises to the endoplasmic reticulum membrane. It carries out the reaction a 1,2-diacyl-sn-glycero-3-phosphocholine(in) = a 1,2-diacyl-sn-glycero-3-phosphocholine(out). The catalysed reaction is a 1,2-diacyl-sn-glycero-3-phospho-(1D-myo-inositol)(in) = a 1,2-diacyl-sn-glycero-3-phospho-(1D-myo-inositol)(out). It catalyses the reaction an N-(acyl)-sphingosylphosphocholine(in) = an N-(acyl)-sphingosylphosphocholine(out). With respect to regulation, phosphatidylinositol transfer activity is inhibited by N-ethylmaleimide. Its function is as follows. Catalyzes the transfer of phosphatidylinositol and phosphatidylcholine between membranes. Also catalyzes the transfer of sphingomyelin. Required for COPI-mediated retrograde transport from the Golgi to the endoplasmic reticulum; phosphatidylinositol and phosphatidylcholine transfer activity is essential for this function. This Homo sapiens (Human) protein is Phosphatidylinositol transfer protein beta isoform (PITPNB).